The primary structure comprises 293 residues: 4-hydroxy-tetrahydrodipicolinate synthase (293 aa).

Threonine 45 lines the pyruvate pocket. The Proton donor/acceptor role is filled by tyrosine 133. Lysine 161 acts as the Schiff-base intermediate with substrate in catalysis. Isoleucine 203 is a pyruvate binding site.

This sequence belongs to the DapA family. Homotetramer; dimer of dimers.

The protein resides in the cytoplasm. It catalyses the reaction L-aspartate 4-semialdehyde + pyruvate = (2S,4S)-4-hydroxy-2,3,4,5-tetrahydrodipicolinate + H2O + H(+). It functions in the pathway amino-acid biosynthesis; L-lysine biosynthesis via DAP pathway; (S)-tetrahydrodipicolinate from L-aspartate: step 3/4. Catalyzes the condensation of (S)-aspartate-beta-semialdehyde [(S)-ASA] and pyruvate to 4-hydroxy-tetrahydrodipicolinate (HTPA). The chain is 4-hydroxy-tetrahydrodipicolinate synthase from Aliivibrio fischeri (strain MJ11) (Vibrio fischeri).